The sequence spans 1833 residues: Proteasome activator complex subunit 4A (1833 aa).

2 HEAT repeats span residues P460–C504 and N983–G1022. Residues S1095–K1122 are disordered. The segment covering L1111–K1122 has biased composition (basic and acidic residues). 4 HEAT repeats span residues L1164 to R1202, D1344 to H1382, S1626 to F1664, and A1670 to L1708. A bromodomain-like (BRDL) region spans residues S1640–K1728.

Belongs to the BLM10 family. As to quaternary structure, homodimer. Interacts with the 20S and 26S proteasomes.

The protein localises to the cytoplasm. It localises to the cytosol. The protein resides in the nucleus. It is found in the nucleus speckle. Functionally, associated component of the proteasome that specifically recognizes acetylated histones and promotes ATP- and ubiquitin-independent degradation of core histones during DNA damage response. Recognizes and binds acetylated histones via its bromodomain-like (BRDL) region and activates the proteasome by opening the gated channel for substrate entry. Binds to the core proteasome via its C-terminus, which occupies the same binding sites as the proteasomal ATPases, opening the closed structure of the proteasome via an active gating mechanism. involved in DNA damage response in somatic cells: binds to acetylated histones and promotes degradation of histones. This chain is Proteasome activator complex subunit 4A (psme4a), found in Danio rerio (Zebrafish).